We begin with the raw amino-acid sequence, 37 residues long: Large ribosomal subunit protein bL36c (37 aa).

The protein belongs to the bacterial ribosomal protein bL36 family.

It is found in the plastid. The protein localises to the chloroplast. In Pisum sativum (Garden pea), this protein is Large ribosomal subunit protein bL36c (rpl36).